The following is a 107-amino-acid chain: MAIVDVVVIPVGTDGPSVSKYIAEIQTKLKEYKAQGKIDYQLTPMNTLIEGDLKDLFEVVQAIHELPFDKGLSRVCTNIRIDDRRDKSRNMNEKVKAVEKYLNDGGN.

This sequence belongs to the UPF0045 family.

The chain is UPF0045 protein in glkA 3'region (dglA) from Staphylococcus xylosus.